Here is a 215-residue protein sequence, read N- to C-terminus: Putative lipoprotein NMB1124/NMB1162 (215 aa).

Residues 1-16 (MKPLILGLAAVLALSA) form the signal peptide. The N-palmitoyl cysteine moiety is linked to residue cysteine 17. The S-diacylglycerol cysteine moiety is linked to residue cysteine 17.

The protein localises to the cell membrane. The protein is Putative lipoprotein NMB1124/NMB1162 of Neisseria meningitidis serogroup B (strain ATCC BAA-335 / MC58).